A 255-amino-acid chain; its full sequence is Thiazole synthase (255 aa).

Catalysis depends on Lys-97, which acts as the Schiff-base intermediate with DXP. 1-deoxy-D-xylulose 5-phosphate is bound by residues Gly-158, 184–185, and 206–207; these read AG and NT.

The protein belongs to the ThiG family. Homotetramer. Forms heterodimers with either ThiH or ThiS.

Its subcellular location is the cytoplasm. It carries out the reaction [ThiS sulfur-carrier protein]-C-terminal-Gly-aminoethanethioate + 2-iminoacetate + 1-deoxy-D-xylulose 5-phosphate = [ThiS sulfur-carrier protein]-C-terminal Gly-Gly + 2-[(2R,5Z)-2-carboxy-4-methylthiazol-5(2H)-ylidene]ethyl phosphate + 2 H2O + H(+). Its pathway is cofactor biosynthesis; thiamine diphosphate biosynthesis. Functionally, catalyzes the rearrangement of 1-deoxy-D-xylulose 5-phosphate (DXP) to produce the thiazole phosphate moiety of thiamine. Sulfur is provided by the thiocarboxylate moiety of the carrier protein ThiS. In vitro, sulfur can be provided by H(2)S. This Acetivibrio thermocellus (strain ATCC 27405 / DSM 1237 / JCM 9322 / NBRC 103400 / NCIMB 10682 / NRRL B-4536 / VPI 7372) (Clostridium thermocellum) protein is Thiazole synthase.